The primary structure comprises 913 residues: Rab GTPase-activating protein tbc-8 (913 aa).

The segment at 1–24 (MQMFRHSSADMWRAKKPTLERRST) is disordered. The RUN domain maps to 106–240 (NLNSPYVTSL…TYRRMSNRIE (135 aa)). The region spanning 597-844 (INTKEVRRMA…KVWEVIWAAQ (248 aa)) is the Rab-GAP TBC domain.

Belongs to the RUTBC family. Interacts with rab-19. Interacts with ric-19; the interaction is direct and may be required for the activation of rab-2 and dense vesicle maturation in cholinergic motoneurons. Interacts (via RUN domain) with rund-1. Does not interact with unc-108 (GTP-bound form). As to expression, expressed in neurons in the head, tail and ventral nerve cord (at protein level).

Its subcellular location is the golgi apparatus. It localises to the trans-Golgi network. It is found in the early endosome. The protein resides in the cytoplasmic vesicle membrane. In terms of biological role, interacts with numerous Rab family members, functioning as Rab effector for some, and as GTPase activator for others. GTPase activator for rab-2. In association with ric-19 activates rab-2 during dense core vesicle maturation in cholinergic motoneurons. The polypeptide is Rab GTPase-activating protein tbc-8 (Caenorhabditis elegans).